Consider the following 394-residue polypeptide: N-acetylgalactosamine-6-phosphate deacetylase (394 aa).

Residue E137 coordinates Zn(2+). Substrate is bound at residue 148 to 149 (CH). H201 and H222 together coordinate Zn(2+). Substrate contacts are provided by residues 225–226 (NG), R233, and 254–257 (DGQH). D280 serves as the catalytic Proton donor/acceptor. 313-315 (LAG) contributes to the substrate binding site.

It belongs to the metallo-dependent hydrolases superfamily. NagA family.

It localises to the cytoplasm. It catalyses the reaction N-acetyl-D-galactosamine 6-phosphate + H2O = D-galactosamine 6-phosphate + acetate. The catalysed reaction is N-acetyl-D-glucosamine 6-phosphate + H2O = D-glucosamine 6-phosphate + acetate. In terms of biological role, involved in the pathway of N-acetyl-D-galactosamine degradation. Catalyzes the conversion of N-acetyl-D-galactosamine 6-phosphate to D-galactosamine 6-phosphate and acetate. It can also catalyze the conversion of N-acetyl-D-glucosamine 6-phosphate. The chain is N-acetylgalactosamine-6-phosphate deacetylase from Shewanella sp. (strain ANA-3).